Consider the following 291-residue polypeptide: ATP phosphoribosyltransferase (291 aa).

Belongs to the ATP phosphoribosyltransferase family. Long subfamily. Mg(2+) serves as cofactor.

The protein resides in the cytoplasm. It carries out the reaction 1-(5-phospho-beta-D-ribosyl)-ATP + diphosphate = 5-phospho-alpha-D-ribose 1-diphosphate + ATP. The protein operates within amino-acid biosynthesis; L-histidine biosynthesis; L-histidine from 5-phospho-alpha-D-ribose 1-diphosphate: step 1/9. Its activity is regulated as follows. Feedback inhibited by histidine. Functionally, catalyzes the condensation of ATP and 5-phosphoribose 1-diphosphate to form N'-(5'-phosphoribosyl)-ATP (PR-ATP). Has a crucial role in the pathway because the rate of histidine biosynthesis seems to be controlled primarily by regulation of HisG enzymatic activity. The sequence is that of ATP phosphoribosyltransferase from Trichlorobacter lovleyi (strain ATCC BAA-1151 / DSM 17278 / SZ) (Geobacter lovleyi).